The primary structure comprises 573 residues: DEAD-box ATP-dependent RNA helicase 47A (573 aa).

A Q motif motif is present at residues 131–159 (KSFEELGLPPLLIDRLNKEGLTAPTEVQS). One can recognise a Helicase ATP-binding domain in the interval 162–362 (IPIISQKHDA…RSWGHDPVLV (201 aa)). Residue 175–182 (SYTGSGKT) coordinates ATP. A DEAD box motif is present at residues 293–296 (DEVD). Residues 421–565 (TLRRCIHALE…PCEFTEGKLL (145 aa)) enclose the Helicase C-terminal domain.

Belongs to the DEAD box helicase family.

It catalyses the reaction ATP + H2O = ADP + phosphate + H(+). This Oryza sativa subsp. japonica (Rice) protein is DEAD-box ATP-dependent RNA helicase 47A.